A 590-amino-acid chain; its full sequence is Multidrug resistance ABC transporter ATP-binding and permease protein (590 aa).

6 helical membrane passes run 35 to 55 (YLFF…QLQV), 79 to 99 (IALY…LGIF), 150 to 170 (IPQA…MLQM), 176 to 196 (LAMI…MTFG), 261 to 281 (VMML…IYLI), and 292 to 312 (LGMM…ATFF). Residues 38–317 (FIIGILAGIV…VATFFTELAK (280 aa)) form the ABC transmembrane type-1 domain. The ABC transporter domain maps to 349–584 (LSARHVDFAY…HPLYAKYVSE (236 aa)). Residue 382–389 (GPSGGGKS) coordinates ATP.

The protein belongs to the ABC transporter superfamily. Multidrug exporter LmrA (TC 3.A.1.117.1) family. Homodimer.

The protein localises to the cell membrane. It carries out the reaction ATP + H2O + xenobioticSide 1 = ADP + phosphate + xenobioticSide 2.. Its function is as follows. Efflux transporter for a variety of amphiphilic cationic compounds, including antibiotics. The sequence is that of Multidrug resistance ABC transporter ATP-binding and permease protein (lmrA) from Lactococcus lactis subsp. lactis (strain IL1403) (Streptococcus lactis).